Here is a 199-residue protein sequence, read N- to C-terminus: Urease accessory protein UreG (199 aa).

Residue 8–15 (GPVGSGKT) coordinates GTP.

The protein belongs to the SIMIBI class G3E GTPase family. UreG subfamily. Homodimer. UreH, UreF and UreG form a complex that acts as a GTP-hydrolysis-dependent molecular chaperone, activating the urease apoprotein by helping to assemble the nickel containing metallocenter of UreC. The UreE protein probably delivers the nickel.

It is found in the cytoplasm. In terms of biological role, facilitates the functional incorporation of the urease nickel metallocenter. This process requires GTP hydrolysis, probably effectuated by UreG. This chain is Urease accessory protein UreG, found in Helicobacter acinonychis (strain Sheeba).